The primary structure comprises 926 residues: Bifunctional uridylyltransferase/uridylyl-removing enzyme (926 aa).

The tract at residues 1-379 (MPVSFLSLAS…PKSRRSGASK (379 aa)) is uridylyltransferase. The interval 380 to 736 (QIDGFPVIQG…GHEMPAYDAT (357 aa)) is uridylyl-removing. Residues 496–618 (VDEHAIRALD…VKSPERLRLL (123 aa)) form the HD domain. ACT domains follow at residues 737 to 814 (MISL…IRSS) and 849 to 926 (VIEV…ISEK).

The protein belongs to the GlnD family. It depends on Mg(2+) as a cofactor.

It catalyses the reaction [protein-PII]-L-tyrosine + UTP = [protein-PII]-uridylyl-L-tyrosine + diphosphate. It carries out the reaction [protein-PII]-uridylyl-L-tyrosine + H2O = [protein-PII]-L-tyrosine + UMP + H(+). Its activity is regulated as follows. Uridylyltransferase (UTase) activity is inhibited by glutamine, while glutamine activates uridylyl-removing (UR) activity. Its function is as follows. Modifies, by uridylylation and deuridylylation, the PII regulatory proteins (GlnB and homologs), in response to the nitrogen status of the cell that GlnD senses through the glutamine level. Under low glutamine levels, catalyzes the conversion of the PII proteins and UTP to PII-UMP and PPi, while under higher glutamine levels, GlnD hydrolyzes PII-UMP to PII and UMP (deuridylylation). Thus, controls uridylylation state and activity of the PII proteins, and plays an important role in the regulation of nitrogen assimilation and metabolism. This is Bifunctional uridylyltransferase/uridylyl-removing enzyme from Zymomonas mobilis subsp. mobilis (strain ATCC 31821 / ZM4 / CP4).